Reading from the N-terminus, the 159-residue chain is uncharacterized protein (159 aa).

The HTH asnC-type domain maps to leucine 6–threonine 66. A DNA-binding region (H-T-H motif) is located at residues aspartate 25 to isoleucine 44.

This is an uncharacterized protein from Pyrococcus horikoshii (strain ATCC 700860 / DSM 12428 / JCM 9974 / NBRC 100139 / OT-3).